The sequence spans 1273 residues: Protein sax-3 (1273 aa).

The signal sequence occupies residues 1–23 (MFNRKTLLCTILLVLQAVIRSFC). Ig-like C2-type domains follow at residues 31-127 (PVII…GSLK), 133-222 (EDFR…ARLS), 227-312 (PKFE…AHLR), 317-411 (PSFQ…LKVT), and 425-511 (PTIE…ASLT). Intrachain disulfides connect Cys-52–Cys-110, Cys-154–Cys-205, Cys-248–Cys-296, Cys-338–Cys-393, and Cys-446–Cys-495. Fibronectin type-III domains lie at 533–628 (SPTQ…TSKP), 653–750 (QLIK…TAEA), and 755–849 (PPED…MNQD). A helical transmembrane segment spans residues 874–894 (VPVIVIVAILIIFVVIIIAYC). The disordered stretch occupies residues 1033-1273 (APAMPTNPVP…NNGIVTQEQT (241 aa)). Residues 1037–1046 (PTNPVPPEPP) are compositionally biased toward pro residues. The span at 1096 to 1105 (QLHSSDGTGS) shows a compositional bias: polar residues. The span at 1106–1115 (SKERTGERRT) shows a compositional bias: basic and acidic residues. Over residues 1125-1136 (IPPPPSNPPPPG) the composition is skewed to pro residues. Positions 1145 to 1156 (QTATRRQLNRGS) are enriched in polar residues. Positions 1207–1222 (MDDDGGSSEADGENSE) are enriched in acidic residues. Residues 1240-1273 (SASTLAHSCYGTNGTAQRFRSIPRNNGIVTQEQT) show a composition bias toward polar residues.

The protein belongs to the immunoglobulin superfamily. ROBO/SAX3 family. As to expression, expressed in the AVG interneuron and the male-specific sensory neuron HOA.

It localises to the membrane. Its function is as follows. Required to confine migrating sex myoblasts to the ventral muscle quadrants during their migration through the body and for multiple aspects of sensory, motor, and interneuron axon guidance. In Caenorhabditis elegans, this protein is Protein sax-3.